The sequence spans 201 residues: 3-isopropylmalate dehydratase small subunit (201 aa).

The protein belongs to the LeuD family. LeuD type 1 subfamily. As to quaternary structure, heterodimer of LeuC and LeuD.

The catalysed reaction is (2R,3S)-3-isopropylmalate = (2S)-2-isopropylmalate. The protein operates within amino-acid biosynthesis; L-leucine biosynthesis; L-leucine from 3-methyl-2-oxobutanoate: step 2/4. Its function is as follows. Catalyzes the isomerization between 2-isopropylmalate and 3-isopropylmalate, via the formation of 2-isopropylmaleate. The chain is 3-isopropylmalate dehydratase small subunit from Shewanella baltica (strain OS155 / ATCC BAA-1091).